Consider the following 679-residue polypeptide: Protein hook (679 aa).

The segment at 1–155 (MSAPKNEMYY…NIMRALQELE (155 aa)) is interaction with microtubules. The 118-residue stretch at 6-123 (NEMYYSLLEW…RLLQLVLGCA (118 aa)) folds into the Calponin-homology (CH) domain. Coiled coils occupy residues 135 to 437 (EIMC…LKCG) and 480 to 574 (QTAL…QEIL).

It belongs to the hook family. In terms of assembly, homodimer. Interacts with microtubules via its N-terminus.

It is found in the cytoplasm. It localises to the cytoskeleton. The protein resides in the endosome. The protein localises to the synapse. Its function is as follows. Involved in endocytic trafficking by stabilizing organelles of the endocytic pathway. Probably acts as a cytoskeletal linker protein required to tether endosome vesicles to the cytoskeleton. Involved in modulation of endocytosis at stages required for down-regulation of membrane proteins that control synapse size. Not involved in synaptic vesicle recycling. Required in R7 cells for boss endocytosis into multivesicular bodies (MVBs). Has a role in regulating adult longevity. The polypeptide is Protein hook (Drosophila melanogaster (Fruit fly)).